A 652-amino-acid chain; its full sequence is Trypanothione synthetase (652 aa).

One can recognise a Peptidase C51 domain in the interval 34-174; the sequence is SNKHDHFFSG…QHKDGVWTII (141 aa). 328–330 provides a ligand contact to ATP; sequence RFD. Mg(2+) contacts are provided by Asp330, Glu344, and Asn346. ATP-binding positions include Lys513, Lys548, Gly555, Gln583, and 618 to 620; that span reads IIT.

It in the C-terminal section; belongs to the glutathionylspermidine synthase preATP-grasp family. Requires Mg(2+) as cofactor. Post-translationally, the N-terminus is blocked.

It carries out the reaction spermidine + glutathione + ATP = glutathionylspermidine + ADP + phosphate + H(+). It catalyses the reaction glutathionylspermidine + glutathione + ATP = trypanothione + ADP + phosphate + H(+). Conjugates glutathione (gamma-Glu-Cys-Gly) and glutathionylspermidine to form trypanothione (N(1),N(8)-bis(glutathionyl)spermidine), which is involved in maintaining intracellular thiol redox and in defense against oxidants. The protein is Trypanothione synthetase (TRS) of Crithidia fasciculata.